The chain runs to 174 residues: Large ribosomal subunit protein uL6 (174 aa).

Belongs to the universal ribosomal protein uL6 family. In terms of assembly, part of the 50S ribosomal subunit.

This protein binds to the 23S rRNA, and is important in its secondary structure. It is located near the subunit interface in the base of the L7/L12 stalk, and near the tRNA binding site of the peptidyltransferase center. In Stenotrophomonas maltophilia (strain R551-3), this protein is Large ribosomal subunit protein uL6.